Consider the following 123-residue polypeptide: Large ribosomal subunit protein bL12 (123 aa).

The protein belongs to the bacterial ribosomal protein bL12 family. Homodimer. Part of the ribosomal stalk of the 50S ribosomal subunit. Forms a multimeric L10(L12)X complex, where L10 forms an elongated spine to which 2 to 4 L12 dimers bind in a sequential fashion. Binds GTP-bound translation factors.

Functionally, forms part of the ribosomal stalk which helps the ribosome interact with GTP-bound translation factors. Is thus essential for accurate translation. The polypeptide is Large ribosomal subunit protein bL12 (Desulfotalea psychrophila (strain LSv54 / DSM 12343)).